The primary structure comprises 499 residues: Heparin cofactor 2 (499 aa).

The N-terminal stretch at 1-19 is a signal peptide; it reads MKHSLNALLIFLIITSAWG. Position 37 is a phosphoserine; by FAM20C (Ser-37). A glycan (N-linked (GlcNAc...) (complex) asparagine) is linked at Asn-49. The tract at residues 68-79 is chemotactic activity; it reads DWIPEGEEDDDY. Tandem repeats lie at residues 73–83 and 87–97. Residues 73–97 are 2 X 11 AA approximate repeats, Asp/Glu-rich (acidic) (hirudin-like); that stretch reads GEEDDDYLDLEKIFSEDDDYIDIVD. Tyr-79 and Tyr-92 each carry sulfotyrosine. An N-linked (GlcNAc...) asparagine glycan is attached at Asn-188. The segment at 192–212 is glycosaminoglycan-binding site; sequence KYEITTIHNLFRKLTHRLFRR. Asn-387 carries an N-linked (GlcNAc...) asparagine glycan.

The protein belongs to the serpin family. Phosphorylated by FAM20C in the extracellular medium. Expressed predominantly in liver. Also present in plasma. As to expression, expressed in plasma (at protein level). Expressed in liver.

Its function is as follows. Thrombin inhibitor activated by the glycosaminoglycans, heparin or dermatan sulfate. In the presence of the latter, HC-II becomes the predominant thrombin inhibitor in place of antithrombin III (AT-III). Also inhibits chymotrypsin, but in a glycosaminoglycan-independent manner. Peptides at the N-terminal of HC-II have chemotactic activity for both monocytes and neutrophils. Functionally, shows negligible inhibition, in vitro, of thrombin and tPA and no inhibition of factor Xa, in vitro. This chain is Heparin cofactor 2 (SERPIND1), found in Homo sapiens (Human).